A 596-amino-acid chain; its full sequence is UDP-glucuronate:xylan alpha-glucuronosyltransferase 2 (596 aa).

The chain crosses the membrane as a helical; Signal-anchor for type II membrane protein span at residues 17–37 (LIRFNLVLLGFSFLLYTAIFF). Mn(2+) contacts are provided by aspartate 395 and aspartate 397. Residues 395-397 (DAD), 424-426 (NSG), 451-455 (NGGDQ), and 504-509 (HYLGWK) each bind substrate. Position 504 (histidine 504) interacts with Mn(2+).

It belongs to the glycosyltransferase 8 family. Glycogenin subfamily. The cofactor is Mn(2+).

It localises to the golgi apparatus membrane. In terms of biological role, glycosyltransferase required for the addition of both glucuronic acid and 4-O-methylglucuronic acid branches to xylan in stem cell walls. In association with GUX1, is responsible for almost all of the substitutions of the xylan backbone in stem glucuronoxylan. The polypeptide is UDP-glucuronate:xylan alpha-glucuronosyltransferase 2 (GUX2) (Arabidopsis thaliana (Mouse-ear cress)).